The primary structure comprises 240 residues: 1-(5-phosphoribosyl)-5-[(5-phosphoribosylamino)methylideneamino] imidazole-4-carboxamide isomerase (240 aa).

The active-site Proton acceptor is D8. Catalysis depends on D130, which acts as the Proton donor.

It belongs to the HisA/HisF family.

The protein resides in the cytoplasm. It catalyses the reaction 1-(5-phospho-beta-D-ribosyl)-5-[(5-phospho-beta-D-ribosylamino)methylideneamino]imidazole-4-carboxamide = 5-[(5-phospho-1-deoxy-D-ribulos-1-ylimino)methylamino]-1-(5-phospho-beta-D-ribosyl)imidazole-4-carboxamide. Its pathway is amino-acid biosynthesis; L-histidine biosynthesis; L-histidine from 5-phospho-alpha-D-ribose 1-diphosphate: step 4/9. The chain is 1-(5-phosphoribosyl)-5-[(5-phosphoribosylamino)methylideneamino] imidazole-4-carboxamide isomerase from Flavobacterium johnsoniae (strain ATCC 17061 / DSM 2064 / JCM 8514 / BCRC 14874 / CCUG 350202 / NBRC 14942 / NCIMB 11054 / UW101) (Cytophaga johnsonae).